Consider the following 243-residue polypeptide: Proteasome subunit beta (243 aa).

Residues 1–16 (MRAPQHNSDFSRTVNQ) are compositionally biased toward polar residues. Positions 1–29 (MRAPQHNSDFSRTVNQLADDPNPYEPEVG) are disordered. Positions 1 to 48 (MRAPQHNSDFSRTVNQLADDPNPYEPEVGSMPKNEFSRADLDNVNKTG) are cleaved as a propeptide — removed in mature form; by autocatalysis. Thr49 serves as the catalytic Nucleophile.

It belongs to the peptidase T1B family. The 20S proteasome core is composed of 14 alpha and 14 beta subunits that assemble into four stacked heptameric rings, resulting in a barrel-shaped structure. The two inner rings, each composed of seven catalytic beta subunits, are sandwiched by two outer rings, each composed of seven alpha subunits. The catalytic chamber with the active sites is on the inside of the barrel. Has a gated structure, the ends of the cylinder being occluded by the N-termini of the alpha-subunits. Is capped at one or both ends by the proteasome regulatory ATPase, PAN.

Its subcellular location is the cytoplasm. It catalyses the reaction Cleavage of peptide bonds with very broad specificity.. Its activity is regulated as follows. The formation of the proteasomal ATPase PAN-20S proteasome complex, via the docking of the C-termini of PAN into the intersubunit pockets in the alpha-rings, triggers opening of the gate for substrate entry. Interconversion between the open-gate and close-gate conformations leads to a dynamic regulation of the 20S proteasome proteolysis activity. In terms of biological role, component of the proteasome core, a large protease complex with broad specificity involved in protein degradation. The chain is Proteasome subunit beta from Natrialba magadii (strain ATCC 43099 / DSM 3394 / CCM 3739 / CIP 104546 / IAM 13178 / JCM 8861 / NBRC 102185 / NCIMB 2190 / MS3) (Natronobacterium magadii).